Reading from the N-terminus, the 598-residue chain is Elongation factor 4 (598 aa).

Residues 4–185 form the tr-type G domain; the sequence is KNIRNFSIIA…TIITKIPAPK (182 aa). Residues 16–21 and 132–135 contribute to the GTP site; these read DHGKST and NKID.

This sequence belongs to the TRAFAC class translation factor GTPase superfamily. Classic translation factor GTPase family. LepA subfamily.

The protein localises to the cell inner membrane. It carries out the reaction GTP + H2O = GDP + phosphate + H(+). Its function is as follows. Required for accurate and efficient protein synthesis under certain stress conditions. May act as a fidelity factor of the translation reaction, by catalyzing a one-codon backward translocation of tRNAs on improperly translocated ribosomes. Back-translocation proceeds from a post-translocation (POST) complex to a pre-translocation (PRE) complex, thus giving elongation factor G a second chance to translocate the tRNAs correctly. Binds to ribosomes in a GTP-dependent manner. The sequence is that of Elongation factor 4 from Campylobacter jejuni subsp. jejuni serotype O:2 (strain ATCC 700819 / NCTC 11168).